Here is a 533-residue protein sequence, read N- to C-terminus: Probable G-protein coupled receptor Mth-like 14 (533 aa).

A signal peptide spans 1–23 (MNLGHWNFLLALISLQTFFNASA). 5 N-linked (GlcNAc...) asparagine glycosylation sites follow: N20, N29, N30, N36, and N47. The Extracellular portion of the chain corresponds to 24 to 242 (QISTVNNSSK…QVEEQIAFAK (219 aa)). The tract at residues 86 to 108 (VQSPVDNPLDPADCSQREKYRKQ) is disordered. An intrachain disulfide couples C120 to C216. N-linked (GlcNAc...) asparagine glycosylation is found at N133, N178, and N206. Residues 243–263 (VVFVAVLMLISMPCLLLVSYL) traverse the membrane as a helical segment. Residues 264–279 (HMTLRLLRNLHGLSLS) are Cytoplasmic-facing. The chain crosses the membrane as a helical span at residues 280 to 300 (LMSLCLASGYFVHSVVHIYGI). At 301 to 303 (PNQ) the chain is on the extracellular side. The chain crosses the membrane as a helical span at residues 304 to 324 (GFIGYVIQFCILSYFFWYLCI). The Cytoplasmic segment spans residues 325–347 (CFNVLLNVWYKLPCCIQCSKSWA). The chain crosses the membrane as a helical span at residues 348–368 (TFNFACYAVFAFSGPATIVAL). At 369 to 395 (TVQKGLPGMPSYFLQGLTESIRDSQRY) the chain is on the extracellular side. A helical transmembrane segment spans residues 396–416 (FIPPVSTILFLSFLLNIISFF). Residues 417-451 (GFQRISGYAKAEKNIQERKCLFDQQKYEDVKKDAK) lie on the Cytoplasmic side of the membrane. Residues 452-472 (CVSLLGIIMVVSWLLEIITFY) traverse the membrane as a helical segment. Residues 473–480 (SGSNSNYL) lie on the Extracellular side of the membrane. Residues 481–501 (ILCDMVNGLQGVWVLLIFLVV) traverse the membrane as a helical segment. The Cytoplasmic portion of the chain corresponds to 502-533 (RRRRTIILRWWYDRGSHEIEGTELQALSNSPT).

The protein belongs to the G-protein coupled receptor 2 family. Mth subfamily.

The protein resides in the cell membrane. The polypeptide is Probable G-protein coupled receptor Mth-like 14 (mthl14) (Drosophila melanogaster (Fruit fly)).